The primary structure comprises 413 residues: CinA-like protein (413 aa).

The protein belongs to the CinA family.

The protein is CinA-like protein of Desulfosudis oleivorans (strain DSM 6200 / JCM 39069 / Hxd3) (Desulfococcus oleovorans).